The following is a 294-amino-acid chain: ATP synthase gamma chain (294 aa).

This sequence belongs to the ATPase gamma chain family. As to quaternary structure, F-type ATPases have 2 components, CF(1) - the catalytic core - and CF(0) - the membrane proton channel. CF(1) has five subunits: alpha(3), beta(3), gamma(1), delta(1), epsilon(1). CF(0) has three main subunits: a, b and c.

It is found in the cell inner membrane. Produces ATP from ADP in the presence of a proton gradient across the membrane. The gamma chain is believed to be important in regulating ATPase activity and the flow of protons through the CF(0) complex. This is ATP synthase gamma chain from Campylobacter jejuni subsp. jejuni serotype O:6 (strain 81116 / NCTC 11828).